A 470-amino-acid chain; its full sequence is uncharacterized protein (470 aa).

Residues 1–24 (MKKLVGSLAAISVLSATGFSYVGY) form the signal peptide.

This is an uncharacterized protein from Mycoplasma capricolum subsp. capricolum (strain California kid / ATCC 27343 / NCTC 10154).